We begin with the raw amino-acid sequence, 144 residues long: Large ribosomal subunit protein uL11m (144 aa).

The N-terminal 32 residues, 1–32 (MASTRTTIIKLIVPAGKATPTPPIGPALGARG), are a transit peptide targeting the mitochondrion.

Belongs to the universal ribosomal protein uL11 family. Component of the mitochondrial large ribosomal subunit (mt-LSU). Mature yeast 74S mitochondrial ribosomes consist of a small (37S) and a large (54S) subunit. The 37S small subunit contains a 15S ribosomal RNA (15S mt-rRNA) and at least 32 different proteins. The 54S large subunit contains a 21S rRNA (21S mt-rRNA) and at least 45 different proteins.

It is found in the mitochondrion. The protein localises to the cytoplasm. Component of the mitochondrial ribosome (mitoribosome), a dedicated translation machinery responsible for the synthesis of mitochondrial genome-encoded proteins, including at least some of the essential transmembrane subunits of the mitochondrial respiratory chain. The mitoribosomes are attached to the mitochondrial inner membrane and translation products are cotranslationally integrated into the membrane. The chain is Large ribosomal subunit protein uL11m from Schizosaccharomyces pombe (strain 972 / ATCC 24843) (Fission yeast).